A 356-amino-acid chain; its full sequence is UDP-3-O-acylglucosamine N-acyltransferase (356 aa).

Histidine 242 serves as the catalytic Proton acceptor.

The protein belongs to the transferase hexapeptide repeat family. LpxD subfamily. In terms of assembly, homotrimer.

It carries out the reaction a UDP-3-O-[(3R)-3-hydroxyacyl]-alpha-D-glucosamine + a (3R)-hydroxyacyl-[ACP] = a UDP-2-N,3-O-bis[(3R)-3-hydroxyacyl]-alpha-D-glucosamine + holo-[ACP] + H(+). Its pathway is bacterial outer membrane biogenesis; LPS lipid A biosynthesis. Catalyzes the N-acylation of UDP-3-O-acylglucosamine using 3-hydroxyacyl-ACP as the acyl donor. Is involved in the biosynthesis of lipid A, a phosphorylated glycolipid that anchors the lipopolysaccharide to the outer membrane of the cell. This chain is UDP-3-O-acylglucosamine N-acyltransferase, found in Acinetobacter baumannii (strain AB307-0294).